Reading from the N-terminus, the 204-residue chain is uncharacterized protein (204 aa).

Residue His9 is the Tele-phosphohistidine intermediate of the active site. Catalysis depends on Glu86, which acts as the Proton donor/acceptor.

The protein belongs to the phosphoglycerate mutase family.

This is an uncharacterized protein from Acanthamoeba polyphaga (Amoeba).